Reading from the N-terminus, the 616-residue chain is Dihydroxy-acid dehydratase (616 aa).

Aspartate 81 contacts Mg(2+). Cysteine 122 is a [2Fe-2S] cluster binding site. 2 residues coordinate Mg(2+): aspartate 123 and lysine 124. Lysine 124 carries the post-translational modification N6-carboxylysine. Cysteine 195 contacts [2Fe-2S] cluster. Glutamate 491 is a Mg(2+) binding site. Serine 517 functions as the Proton acceptor in the catalytic mechanism.

It belongs to the IlvD/Edd family. As to quaternary structure, homodimer. It depends on [2Fe-2S] cluster as a cofactor. The cofactor is Mg(2+).

It carries out the reaction (2R)-2,3-dihydroxy-3-methylbutanoate = 3-methyl-2-oxobutanoate + H2O. The enzyme catalyses (2R,3R)-2,3-dihydroxy-3-methylpentanoate = (S)-3-methyl-2-oxopentanoate + H2O. The protein operates within amino-acid biosynthesis; L-isoleucine biosynthesis; L-isoleucine from 2-oxobutanoate: step 3/4. It functions in the pathway amino-acid biosynthesis; L-valine biosynthesis; L-valine from pyruvate: step 3/4. In terms of biological role, functions in the biosynthesis of branched-chain amino acids. Catalyzes the dehydration of (2R,3R)-2,3-dihydroxy-3-methylpentanoate (2,3-dihydroxy-3-methylvalerate) into 2-oxo-3-methylpentanoate (2-oxo-3-methylvalerate) and of (2R)-2,3-dihydroxy-3-methylbutanoate (2,3-dihydroxyisovalerate) into 2-oxo-3-methylbutanoate (2-oxoisovalerate), the penultimate precursor to L-isoleucine and L-valine, respectively. This chain is Dihydroxy-acid dehydratase, found in Escherichia fergusonii (strain ATCC 35469 / DSM 13698 / CCUG 18766 / IAM 14443 / JCM 21226 / LMG 7866 / NBRC 102419 / NCTC 12128 / CDC 0568-73).